The primary structure comprises 67 residues: Mu-conotoxin TsIIIA (67 aa).

The first 20 residues, 1–20 (MMSKLGVLLTICLLLFPLTA), serve as a signal peptide directing secretion. The propeptide occupies 21-48 (VPLDGDQPADQPAERKQNEQHPLFDQKR). 3 cysteine pairs are disulfide-bonded: cysteine 50-cysteine 59, cysteine 51-cysteine 64, and cysteine 55-cysteine 65.

It belongs to the conotoxin M superfamily. As to expression, expressed by the venom duct.

Its subcellular location is the secreted. Functionally, mu-conotoxins block voltage-gated sodium channels (Nav). This toxin specifically inhibits mammalian Nav1.8/SCN10A sodium currents (IC(50)=2.11 uM) without inducing a shift in the current-voltage relationship of this channel. In vivo, shows potent analgesic activity in a mice hotplate analgesic assay. In addition, this toxin has better analgesic effects than Ziconotide, an analgesic drug. The protein is Mu-conotoxin TsIIIA of Conus tessulatus (Tessellate cone).